We begin with the raw amino-acid sequence, 270 residues long: tRNA (guanine-N(1)-)-methyltransferase (270 aa).

Residues glycine 113 and 133-138 (IGDYVL) each bind S-adenosyl-L-methionine. The tract at residues 251–270 (APTEGTGLIHHRDVEGPGEG) is disordered. Over residues 260–270 (HHRDVEGPGEG) the composition is skewed to basic and acidic residues.

It belongs to the RNA methyltransferase TrmD family. As to quaternary structure, homodimer.

Its subcellular location is the cytoplasm. The catalysed reaction is guanosine(37) in tRNA + S-adenosyl-L-methionine = N(1)-methylguanosine(37) in tRNA + S-adenosyl-L-homocysteine + H(+). Specifically methylates guanosine-37 in various tRNAs. The chain is tRNA (guanine-N(1)-)-methyltransferase from Frankia casuarinae (strain DSM 45818 / CECT 9043 / HFP020203 / CcI3).